The primary structure comprises 457 residues: Glucuronide carrier protein homolog (457 aa).

Over 1 to 11 the chain is Cytoplasmic; the sequence is MNQQLSWRTIV. The helical transmembrane segment at 12-34 threads the bilayer; the sequence is GYSLGDVANNFAFAMGALFLLSY. Residues 35–37 are Periplasmic-facing; it reads YTD. A helical membrane pass occupies residues 38 to 60; sequence VAGVGAAAAGTMLLLVRVFDAFA. Topologically, residues 61–79 are cytoplasmic; it reads DVFAGRVVDSVNTRWGKFR. A helical transmembrane segment spans residues 80–100; sequence PFLLFGTAPLMIFSVLVFWVL. Topologically, residues 101–108 are periplasmic; it reads TDWSHGSK. A helical membrane pass occupies residues 109-129; sequence VVYAYLTYMGLGLCYSLVNIP. Residues 130-146 are Cytoplasmic-facing; that stretch reads YGSLATAMTQQPQSRAR. A helical transmembrane segment spans residues 147-167; sequence LGAARGIAASLTFVCLAFLIG. At 168–180 the chain is on the periplasmic side; that stretch reads PSIKNSSPEEMVS. The chain crosses the membrane as a helical span at residues 181–201; sequence VYHFWTIVLAIAGMVLYFICF. At 202-228 the chain is on the cytoplasmic side; that stretch reads KSTRENVVRIVAQPSLNISLQTLKRNR. The chain crosses the membrane as a helical span at residues 229-249; the sequence is PLFMLCIGALCVLISTFAVSA. Topologically, residues 250 to 263 are periplasmic; the sequence is SSLFYVRYVLNDTG. The chain crosses the membrane as a helical span at residues 264–284; the sequence is LFTVLVLVQNLVGTVASAPLV. The Cytoplasmic segment spans residues 285-296; it reads PGMVARIGKKNT. The helical transmembrane segment at 297-316 threads the bilayer; that stretch reads FLIGALLGTCGYLLFFWVSV. Residues 317-320 lie on the Periplasmic side of the membrane; sequence WSLP. The helical transmembrane segment at 321–343 threads the bilayer; that stretch reads VALVALAIASIGQGVTMTVMWAL. Topologically, residues 344-372 are cytoplasmic; the sequence is EADTVEYGEYLTGVRIEGLTYSLFSFTRK. A helical transmembrane segment spans residues 373-393; sequence CGQAIGGSIPAFILGLSGYIA. At 394 to 408 the chain is on the periplasmic side; it reads NQVQTPEVIMGIRTS. A helical membrane pass occupies residues 409-429; sequence IALVPCGFMLLAFVIIWFYPL. At 430–457 the chain is on the cytoplasmic side; it reads TDKKFKEIVVEIDNRKKVQQQLISDITN.

The protein belongs to the sodium:galactoside symporter (TC 2.A.2) family.

Its subcellular location is the cell inner membrane. This is Glucuronide carrier protein homolog (uidB) from Escherichia coli (strain K12).